Here is a 78-residue protein sequence, read N- to C-terminus: Defensin-like protein 90 (78 aa).

Positions 1-25 (MTTKMFSYVLLHSLMMFAIILSSMG) are cleaved as a signal peptide. Cystine bridges form between C33/C70, C38/C59, C44/C68, and C48/C69.

Belongs to the DEFL family.

The protein localises to the secreted. This chain is Defensin-like protein 90, found in Arabidopsis thaliana (Mouse-ear cress).